Here is a 1379-residue protein sequence, read N- to C-terminus: DNA-directed RNA polymerase subunit beta (1379 aa).

Belongs to the RNA polymerase beta chain family. In terms of assembly, the RNAP catalytic core consists of 2 alpha, 1 beta, 1 beta' and 1 omega subunit. When a sigma factor is associated with the core the holoenzyme is formed, which can initiate transcription.

It catalyses the reaction RNA(n) + a ribonucleoside 5'-triphosphate = RNA(n+1) + diphosphate. Functionally, DNA-dependent RNA polymerase catalyzes the transcription of DNA into RNA using the four ribonucleoside triphosphates as substrates. This chain is DNA-directed RNA polymerase subunit beta, found in Rhizobium leguminosarum bv. trifolii (strain WSM2304).